The primary structure comprises 592 residues: Frizzled-9 (592 aa).

Residues Met-1 to Ala-23 form the signal peptide. The Extracellular segment spans residues Leu-24–Asp-230. In terms of domain architecture, FZ spans Arg-35–Ala-156. 5 cysteine pairs are disulfide-bonded: Cys-40–Cys-101, Cys-48–Cys-94, Cys-85–Cys-123, Cys-112–Cys-153, and Cys-116–Cys-140. The tract at residues Pro-59 to Met-173 is required for Wnt-activated receptor activity. The helical transmembrane segment at Phe-231 to Val-251 threads the bilayer. Over Phe-252–Pro-267 the chain is Cytoplasmic. A helical transmembrane segment spans residues Ile-268–Ala-288. Over Gly-289 to Cys-314 the chain is Extracellular. Residues Thr-315–Leu-335 form a helical membrane-spanning segment. At Thr-336–Gly-356 the chain is on the cytoplasmic side. A helical transmembrane segment spans residues Ser-357–Leu-377. Over Arg-378 to Gly-401 the chain is Extracellular. Residues Phe-402–Phe-422 traverse the membrane as a helical segment. At Val-423–Lys-448 the chain is on the cytoplasmic side. The helical transmembrane segment at Ile-449–Tyr-469 threads the bilayer. At Glu-470–Ala-509 the chain is on the extracellular side. The chain crosses the membrane as a helical span at residues Val-510 to Trp-530. Residues Ser-531 to Leu-592 are Cytoplasmic-facing. The Lys-Thr-X-X-X-Trp motif, mediates interaction with the PDZ domain of Dvl family members signature appears at Lys-533 to Trp-538. A required for CTNNB1 accumulation and TCF transcription factor activity region spans residues Ala-555–Leu-592.

Belongs to the G-protein coupled receptor Fz/Smo family. In terms of processing, ubiquitinated by ZNRF3, leading to its degradation by the proteasome.

The protein resides in the cell membrane. Receptor for WNT2 that is coupled to the beta-catenin canonical signaling pathway, which leads to the activation of disheveled proteins, inhibition of GSK-3 kinase, nuclear accumulation of beta-catenin and activation of Wnt target genes. Plays a role in neuromuscular junction (NMJ) assembly by negatively regulating the clustering of acetylcholine receptors (AChR) through the beta-catenin canonical signaling pathway. May play a role in neural progenitor cells (NPCs) viability through the beta-catenin canonical signaling pathway by negatively regulating cell cycle arrest leading to inhibition of neuron apoptotic process. During hippocampal development, regulates neuroblast proliferation and apoptotic cell death. Controls bone formation through non canonical Wnt signaling mediated via ISG15. Positively regulates bone regeneration through non canonical Wnt signaling. The protein is Frizzled-9 of Rattus norvegicus (Rat).